Here is a 353-residue protein sequence, read N- to C-terminus: C-X-C chemokine receptor type 4 (353 aa).

The segment at 1-22 (MEELHIYPSDNYTEEDLGSGDY) is important for chemokine binding and signaling. Residues 1–39 (MEELHIYPSDNYTEEDLGSGDYDSMKEPCFREENAHFNR) lie on the Extracellular side of the membrane. At tyrosine 7 the chain carries Sulfotyrosine. Asparagine 11 carries N-linked (GlcNAc...) asparagine glycosylation. Tyrosine 12 carries the sulfotyrosine modification. A glycan (O-linked (Xyl...) (chondroitin sulfate) serine) is linked at serine 19. Sulfotyrosine is present on tyrosine 22. 2 cysteine pairs are disulfide-bonded: cysteine 29–cysteine 275 and cysteine 110–cysteine 187. The chain crosses the membrane as a helical span at residues 40–64 (IFLPTVYSIIFLTGIVGNGLVILVM). At 65–78 (GYQKKLRSMTDKYR) the chain is on the cytoplasmic side. A helical membrane pass occupies residues 79–100 (LHLSVADLLFVLTLPFWAVEAV). A chemokine binding region spans residues 95-98 (WAVE). The Extracellular portion of the chain corresponds to 101 to 111 (ANWYFGNFLCK). Residues 112–131 (AVHVIYTVNLYSSVLILAFI) traverse the membrane as a helical segment. A chemokine binding region spans residues 114–118 (HVIYT). Topologically, residues 132-155 (SLDRYLAIVHATNSQRPRKLLAEK) are cytoplasmic. The Important for signaling motif lies at 134–136 (DRY). Residues 136 to 148 (YLAIVHATNSQRP) are involved in dimerization; when bound to chemokine. The chain crosses the membrane as a helical span at residues 156–175 (VVYVGVWIPALLLTIPDFIF). Residues 176–196 (ANVREADDRYICDRFYPNDSW) lie on the Extracellular side of the membrane. Residues 187-191 (CDRFY) form a chemokine binding, important for signaling region. The tract at residues 192–211 (PNDSWLVVFQFQHIMVGLIL) is involved in dimerization. A helical transmembrane segment spans residues 197 to 217 (LVVFQFQHIMVGLILPGIVIL). The Cytoplasmic portion of the chain corresponds to 218–242 (SCYCIIISKLSHSKGYQKRKALKTT). Residues 243 to 262 (VILILAFFACWLPYYIGISI) form a helical membrane-spanning segment. At 263 to 283 (DSFILLEIIKQGCEFEKTVHK) the chain is on the extracellular side. Residues 267-269 (LLE) are involved in dimerization. Residues 284 to 303 (WISITEALAFFHCCLNPILY) traverse the membrane as a helical segment. Topologically, residues 304 to 353 (AFLGAKFKTSAQHALTSVSRGSSLKILSKGKRGGHSSVSTESESSSFHSS) are cytoplasmic. Phosphoserine occurs at positions 320 and 322. A phosphoserine; by PKC and GRK6 mark is found at serine 325 and serine 326. The disordered stretch occupies residues 330-353 (LSKGKRGGHSSVSTESESSSFHSS). Serine 331 carries the phosphoserine; by GRK6 modification. Residue lysine 332 forms a Glycyl lysine isopeptide (Lys-Gly) (interchain with G-Cter in ubiquitin) linkage. Over residues 338-353 (HSSVSTESESSSFHSS) the composition is skewed to low complexity. Serine 340 is subject to Phosphoserine; by GRK6. Phosphoserine occurs at positions 349 and 352.

This sequence belongs to the G-protein coupled receptor 1 family. As to quaternary structure, monomer. Can form homodimers. Interacts with CD164. Interacts with ARRB2; the interaction is dependent on the C-terminal phosphorylation of CXCR4 and allows activation of MAPK1 and MAPK3. Interacts with ARR3; the interaction is dependent on the C-terminal phosphorylation of CXCR4 and modulates calcium mobilization. Interacts with RNF113A; the interaction, enhanced by CXCL12, promotes CXCR4 ubiquitination and subsequent degradation. Interacts (via the cytoplasmic C-terminal) with ITCH (via the WW domains I and II); the interaction, enhanced by CXCL12, promotes CXCR4 ubiquitination and leads to its degradation. Interacts with extracellular ubiquitin. Interacts with DBN1; this interaction is enhanced by antigenic stimulation. Following LPS binding, may form a complex with GDF5, HSP90AA1 and HSPA8. Post-translationally, phosphorylated on agonist stimulation. Rapidly phosphorylated on serine and threonine residues in the C-terminal. Phosphorylation at Ser-325 and Ser-326 leads to recruitment of ITCH, ubiquitination and protein degradation. Ubiquitinated after ligand binding, leading to its degradation. Ubiquitinated by ITCH at the cell membrane on agonist stimulation. The ubiquitin-dependent mechanism, endosomal sorting complex required for transport (ESCRT), then targets CXCR4 for lysosomal degradation. This process is dependent also on prior Ser-/Thr-phosphorylation in the C-terminal of CXCR4. Also binding of ARRB1 to STAM negatively regulates CXCR4 sorting to lysosomes though modulating ubiquitination of SFR5S. In terms of processing, sulfation is required for efficient binding of CXCL12/SDF-1alpha and promotes its dimerization. Post-translationally, O- and N-glycosylated. N-glycosylation can mask coreceptor function. The O-glycosylation chondroitin sulfate attachment does not affect interaction with CXCL12/SDF-1alpha nor its coreceptor activity.

The protein localises to the cell membrane. It is found in the cell junction. It localises to the early endosome. Its subcellular location is the late endosome. The protein resides in the lysosome. In terms of biological role, receptor for the C-X-C chemokine CXCL12/SDF-1 that transduces a signal by increasing intracellular calcium ion levels and enhancing MAPK1/MAPK3 activation. Involved in the AKT signaling cascade. Plays a role in regulation of cell migration, e.g. during wound healing. Acts as a receptor for extracellular ubiquitin; leading to enhanced intracellular calcium ions and reduced cellular cAMP levels. Binds bacterial lipopolysaccharide (LPS) et mediates LPS-induced inflammatory response, including TNF secretion by monocytes. Involved in hematopoiesis and in cardiac ventricular septum formation. Also plays an essential role in vascularization of the gastrointestinal tract, probably by regulating vascular branching and/or remodeling processes in endothelial cells. Involved in cerebellar development. In the CNS, could mediate hippocampal-neuron survival. The polypeptide is C-X-C chemokine receptor type 4 (CXCR4) (Canis lupus familiaris (Dog)).